Reading from the N-terminus, the 145-residue chain is Large ribosomal subunit protein bL9 (145 aa).

This sequence belongs to the bacterial ribosomal protein bL9 family.

Its function is as follows. Binds to the 23S rRNA. In Mesomycoplasma hyopneumoniae (strain 232) (Mycoplasma hyopneumoniae), this protein is Large ribosomal subunit protein bL9.